A 125-amino-acid chain; its full sequence is Large ribosomal subunit protein eL8 (125 aa).

This sequence belongs to the eukaryotic ribosomal protein eL8 family. Part of the 50S ribosomal subunit. Probably part of the RNase P complex.

The protein localises to the cytoplasm. Functionally, multifunctional RNA-binding protein that recognizes the K-turn motif in ribosomal RNA, the RNA component of RNase P, box H/ACA, box C/D and box C'/D' sRNAs. The sequence is that of Large ribosomal subunit protein eL8 from Nanoarchaeum equitans (strain Kin4-M).